An 88-amino-acid polypeptide reads, in one-letter code: Large ribosomal subunit protein bL31B (88 aa).

It belongs to the bacterial ribosomal protein bL31 family. Type B subfamily. As to quaternary structure, part of the 50S ribosomal subunit.

The chain is Large ribosomal subunit protein bL31B from Corynebacterium efficiens (strain DSM 44549 / YS-314 / AJ 12310 / JCM 11189 / NBRC 100395).